We begin with the raw amino-acid sequence, 163 residues long: Ribonuclease H (163 aa).

The region spanning 1-142 (MRKQVAIFTD…CDELARTAAC (142 aa)) is the RNase H type-1 domain. Asp10, Glu48, Asp70, and Asp134 together coordinate Mg(2+).

The protein belongs to the RNase H family. As to quaternary structure, monomer. Mg(2+) serves as cofactor.

The protein resides in the cytoplasm. It carries out the reaction Endonucleolytic cleavage to 5'-phosphomonoester.. Functionally, endonuclease that specifically degrades the RNA of RNA-DNA hybrids. The chain is Ribonuclease H from Sodalis glossinidius (strain morsitans).